A 313-amino-acid chain; its full sequence is Hydroxyacylglutathione hydrolase, mitochondrial (313 aa).

Positions 107, 109, 111, 112, 163, and 187 each coordinate Zn(2+). Substrate contacts are provided by residues 196–198 (KFF) and 226–228 (HEY). Residue His-226 coordinates Zn(2+). Composition is skewed to basic and acidic residues over residues 285-294 (VQEHAGERDP) and 301-313 (IRKEKDHFKVPKD). The segment at 285-313 (VQEHAGERDPISTMGAIRKEKDHFKVPKD) is disordered. 302–305 (RKEK) contacts substrate.

The protein belongs to the metallo-beta-lactamase superfamily. Glyoxalase II family. Monomer. Requires Zn(2+) as cofactor.

The protein localises to the mitochondrion matrix. Its subcellular location is the cytoplasm. It catalyses the reaction an S-(2-hydroxyacyl)glutathione + H2O = a 2-hydroxy carboxylate + glutathione + H(+). The catalysed reaction is (R)-S-lactoylglutathione + H2O = (R)-lactate + glutathione + H(+). Functionally, thiolesterase that catalyzes the hydrolysis of S-D-lactoyl-glutathione to form glutathione and D-lactic acid. This Xenopus tropicalis (Western clawed frog) protein is Hydroxyacylglutathione hydrolase, mitochondrial (hagh).